We begin with the raw amino-acid sequence, 57 residues long: Large ribosomal subunit protein bL32 (57 aa).

The segment covering 1-22 (MAVPKKKTSKAKRDQRRAHWRR) has biased composition (basic residues). Positions 1-35 (MAVPKKKTSKAKRDQRRAHWRRQASSQAQKALSLG) are disordered.

It belongs to the bacterial ribosomal protein bL32 family.

This is Large ribosomal subunit protein bL32 (rpmF) from Synechocystis sp. (strain ATCC 27184 / PCC 6803 / Kazusa).